Here is a 147-residue protein sequence, read N- to C-terminus: DNA polymerase epsilon subunit 3 (147 aa).

A2 bears the N-acetylalanine mark. A Phosphothreonine modification is found at T83. Residues 85-146 (LKEALEAYRR…EEQNEEEEVD (62 aa)) are a coiled coil. A compositionally biased stretch (basic and acidic residues) spans 93-124 (RREQKGKKEASEQKKKDKDKKTDSEEQDKSRD). A disordered region spans residues 93–147 (RREQKGKKEASEQKKKDKDKKTDSEEQDKSRDEDNDEDEERLEEEEQNEEEEVDN). S122 carries the phosphoserine modification. Over residues 125–147 (EDNDEDEERLEEEEQNEEEEVDN) the composition is skewed to acidic residues.

In terms of assembly, component of the DNA polymerase epsilon complex consisting of four subunits: the catalytic subunit POLE and the accessory subunits POLE2, POLE3 and POLE4. Interaction with POLE4 is a prerequisite for further binding with POLE and POLE2. Heterodimer with CHRAC1; binds to DNA. Component of the CHRAC ISWI chromatin remodeling complex at least composed of SMARCA5/SNF2H, BAZ1A/ACF1, CHRAC1 and POLE3; the complex preferentially binds DNA through the CHRAC1-POLE3 heterodimer and possesses ATP-dependent nucleosome-remodeling activity. Within the complex, the heterodimer with CHRAC1 interacts with SMARCA5/SNF2H; the interaction is direct and enhances nucleosome sliding activity by the SMARCA5/SNF2H and BAZ1A/ACF1 interaction. Within the complex, the heterodimer with CHRAC1 interacts with BAZ1A/ACF1; the interactions are direct.

It is found in the nucleus. In terms of biological role, accessory component of the DNA polymerase epsilon complex. Participates in DNA repair and in chromosomal DNA replication. Forms a complex with CHRAC1 and binds naked DNA, which is then incorporated into chromatin, aided by the nucleosome-remodeling activity of ISWI/SNF2H and ACF1. Does not enhance nucleosome sliding activity of the ACF-5 ISWI chromatin remodeling complex. This chain is DNA polymerase epsilon subunit 3 (POLE3), found in Bos taurus (Bovine).